A 113-amino-acid polypeptide reads, in one-letter code: CRISPR-associated endoribonuclease Cas2 2 (113 aa).

Aspartate 32 contacts Mg(2+).

It belongs to the CRISPR-associated endoribonuclease Cas2 protein family. In terms of assembly, homodimer, forms a heterotetramer with a Cas1 homodimer. The cofactor is Mg(2+).

In terms of biological role, CRISPR (clustered regularly interspaced short palindromic repeat), is an adaptive immune system that provides protection against mobile genetic elements (viruses, transposable elements and conjugative plasmids). CRISPR clusters contain sequences complementary to antecedent mobile elements and target invading nucleic acids. CRISPR clusters are transcribed and processed into CRISPR RNA (crRNA). Functions as a ssRNA-specific endoribonuclease. Involved in the integration of spacer DNA into the CRISPR cassette. This chain is CRISPR-associated endoribonuclease Cas2 2 (cas22), found in Nitrosomonas europaea (strain ATCC 19718 / CIP 103999 / KCTC 2705 / NBRC 14298).